A 147-amino-acid chain; its full sequence is Ribosome maturation factor RimP (147 aa).

This sequence belongs to the RimP family.

It is found in the cytoplasm. Required for maturation of 30S ribosomal subunits. The polypeptide is Ribosome maturation factor RimP (Sulfurihydrogenibium sp. (strain YO3AOP1)).